Consider the following 527-residue polypeptide: ADP-ribosylation factor-like protein 13B (527 aa).

Residues 26–33, 69–73, and 128–131 contribute to the GTP site; these read GLDNAGKT, DLGGG, and NKQD. The segment covering 200–248 has biased composition (basic and acidic residues); it reads EEVRQEEARKKKEREERLRKQREERLRQQKEEEERAREVEKENELHDGK. 2 disordered regions span residues 200–252 and 300–503; these read EEVR…APSL and GLPH…FSLV. The segment covering 381-444 has biased composition (low complexity); it reads QPSDAGVGSS…GSVFAPRPAS (64 aa). Over residues 445–457 the composition is skewed to gly residues; the sequence is AGGGGPGSRGSGS.

This sequence belongs to the small GTPase superfamily. Arf family. Monomer.

Its subcellular location is the cell projection. The protein localises to the cilium membrane. Cilium-specific protein required to control the microtubule-based, ciliary axoneme structure. May act by maintaining the association between IFT subcomplexes A and B. The chain is ADP-ribosylation factor-like protein 13B (ARL13) from Chlamydomonas reinhardtii (Chlamydomonas smithii).